The primary structure comprises 356 residues: Histidinol-phosphate aminotransferase (356 aa).

Lys-214 carries the post-translational modification N6-(pyridoxal phosphate)lysine.

It belongs to the class-II pyridoxal-phosphate-dependent aminotransferase family. Histidinol-phosphate aminotransferase subfamily. In terms of assembly, homodimer. Requires pyridoxal 5'-phosphate as cofactor.

The catalysed reaction is L-histidinol phosphate + 2-oxoglutarate = 3-(imidazol-4-yl)-2-oxopropyl phosphate + L-glutamate. It participates in amino-acid biosynthesis; L-histidine biosynthesis; L-histidine from 5-phospho-alpha-D-ribose 1-diphosphate: step 7/9. The polypeptide is Histidinol-phosphate aminotransferase (Escherichia fergusonii (strain ATCC 35469 / DSM 13698 / CCUG 18766 / IAM 14443 / JCM 21226 / LMG 7866 / NBRC 102419 / NCTC 12128 / CDC 0568-73)).